Consider the following 337-residue polypeptide: Phosphate acyltransferase (337 aa).

It belongs to the PlsX family. In terms of assembly, homodimer. Probably interacts with PlsY.

The protein localises to the cytoplasm. It carries out the reaction a fatty acyl-[ACP] + phosphate = an acyl phosphate + holo-[ACP]. It functions in the pathway lipid metabolism; phospholipid metabolism. Its function is as follows. Catalyzes the reversible formation of acyl-phosphate (acyl-PO(4)) from acyl-[acyl-carrier-protein] (acyl-ACP). This enzyme utilizes acyl-ACP as fatty acyl donor, but not acyl-CoA. The polypeptide is Phosphate acyltransferase (Halalkalibacterium halodurans (strain ATCC BAA-125 / DSM 18197 / FERM 7344 / JCM 9153 / C-125) (Bacillus halodurans)).